A 179-amino-acid chain; its full sequence is Ribosome maturation factor RimM (179 aa).

The PRC barrel domain occupies 100–176; that stretch reads KEEFHLLELI…FIIINPPNGL (77 aa).

This sequence belongs to the RimM family. In terms of assembly, binds ribosomal protein uS19.

It localises to the cytoplasm. In terms of biological role, an accessory protein needed during the final step in the assembly of 30S ribosomal subunit, possibly for assembly of the head region. Essential for efficient processing of 16S rRNA. May be needed both before and after RbfA during the maturation of 16S rRNA. It has affinity for free ribosomal 30S subunits but not for 70S ribosomes. In Prochlorococcus marinus (strain MIT 9215), this protein is Ribosome maturation factor RimM.